Here is a 123-residue protein sequence, read N- to C-terminus: Defensin beta 118 (123 aa).

Residues 1 to 19 (MKLLLLALPVLVLLPQVIP) form the signal peptide. Disulfide bonds link C27/C54, C34/C48, and C38/C55. The propeptide occupies 65–123 (VPMTSPTPLSDSTPGIIDDILTVRFTTDYFEVSSKKDMVEESEAGRGTETSLPNVHHSS). The span at 100-110 (KDMVEESEAGR) shows a compositional bias: basic and acidic residues. The disordered stretch occupies residues 100–123 (KDMVEESEAGRGTETSLPNVHHSS). Residues 112 to 123 (TETSLPNVHHSS) are compositionally biased toward polar residues.

The protein belongs to the beta-defensin family. In terms of processing, the three-dimensional structure formed by the three intramolecular disulfide bridges is indispensable for antimicrobial activity.

The protein resides in the secreted. Functionally, host defense peptide that exhibits antimicrobial activity against both Gram-negative bacteria, such as E.coli and S.typhimurium, and Gram-positive bacteria, such as S.aureus and B.subtilis. Inhibits cell adhesion of E.coli on intestinal epithelial enterocytes. Causes rapid permeabilization of both the outer and inner membrane of E.coli, leading to morphological alterations on the bacterial surface. Binds to bacterial lipopolysaccharides (LPS) with high affinity, and may thereby be involved in immunoregulation through LPS neutralization. May contribute to epididymal innate immunity and protect the sperm against attack by microorganisms. The polypeptide is Defensin beta 118 (DEFB118) (Pan troglodytes (Chimpanzee)).